Here is a 690-residue protein sequence, read N- to C-terminus: Guanylate cyclase soluble subunit alpha-1 (690 aa).

Serine 266 is subject to Phosphoserine. One can recognise a Guanylate cyclase domain in the interval 480–607 (TMLFSDIVGF…NNVTLANKFE (128 aa)).

This sequence belongs to the adenylyl cyclase class-4/guanylyl cyclase family. As to quaternary structure, the active enzyme is formed by a heterodimer of an alpha and a beta subunit. Heterodimer with GUCY1B1. Mg(2+) serves as cofactor. It depends on Mn(2+) as a cofactor.

The protein resides in the cytoplasm. It catalyses the reaction GTP = 3',5'-cyclic GMP + diphosphate. Its activity is regulated as follows. Activated by nitric oxide in the presence of magnesium or manganese ions. This Rattus norvegicus (Rat) protein is Guanylate cyclase soluble subunit alpha-1 (Gucy1a1).